A 297-amino-acid polypeptide reads, in one-letter code: HTH-type transcriptional regulator ArgP (297 aa).

The region spanning 4–60 (PDYRTLQALDAVIRERGFERAAQKLCITQSAVSQRIKQLENMFGQPLLVRTVPPRPT) is the HTH lysR-type domain. A DNA-binding region (H-T-H motif) is located at residues 21 to 40 (FERAAQKLCITQSAVSQRIK).

This sequence belongs to the LysR transcriptional regulatory family. As to quaternary structure, homodimer.

Functionally, controls the transcription of genes involved in arginine and lysine metabolism. The polypeptide is HTH-type transcriptional regulator ArgP (Salmonella arizonae (strain ATCC BAA-731 / CDC346-86 / RSK2980)).